A 139-amino-acid chain; its full sequence is Small ribosomal subunit protein uS12 (139 aa).

The segment at 1–55 (MPTINQLIRKGRKAKVKKSDSPALNKGYNSFKKVQTDLSSPQKRGVCTRVGTMTP) is disordered. Residues 32-42 (KKVQTDLSSPQ) are compositionally biased toward polar residues.

This sequence belongs to the universal ribosomal protein uS12 family. Part of the 30S ribosomal subunit. Contacts proteins S8 and S17. May interact with IF1 in the 30S initiation complex.

In terms of biological role, with S4 and S5 plays an important role in translational accuracy. Its function is as follows. Interacts with and stabilizes bases of the 16S rRNA that are involved in tRNA selection in the A site and with the mRNA backbone. Located at the interface of the 30S and 50S subunits, it traverses the body of the 30S subunit contacting proteins on the other side and probably holding the rRNA structure together. The combined cluster of proteins S8, S12 and S17 appears to hold together the shoulder and platform of the 30S subunit. The chain is Small ribosomal subunit protein uS12 from Halalkalibacterium halodurans (strain ATCC BAA-125 / DSM 18197 / FERM 7344 / JCM 9153 / C-125) (Bacillus halodurans).